The primary structure comprises 765 residues: 1,4-alpha-glucan branching enzyme GlgB (765 aa).

Residue Asp-431 is the Nucleophile of the active site. Glu-484 (proton donor) is an active-site residue.

Belongs to the glycosyl hydrolase 13 family. GlgB subfamily. In terms of assembly, monomer.

The catalysed reaction is Transfers a segment of a (1-&gt;4)-alpha-D-glucan chain to a primary hydroxy group in a similar glucan chain.. The protein operates within glycan biosynthesis; glycogen biosynthesis. In terms of biological role, catalyzes the formation of the alpha-1,6-glucosidic linkages in glycogen by scission of a 1,4-alpha-linked oligosaccharide from growing alpha-1,4-glucan chains and the subsequent attachment of the oligosaccharide to the alpha-1,6 position. The chain is 1,4-alpha-glucan branching enzyme GlgB from Synechococcus sp. (strain CC9311).